The following is a 228-amino-acid chain: Sugar fermentation stimulation protein homolog (228 aa).

It belongs to the SfsA family.

The protein is Sugar fermentation stimulation protein homolog of Psychromonas ingrahamii (strain DSM 17664 / CCUG 51855 / 37).